The following is a 231-amino-acid chain: DNA mismatch repair protein MutH (231 aa).

Belongs to the MutH family.

The protein resides in the cytoplasm. Functionally, sequence-specific endonuclease that cleaves unmethylated GATC sequences. It is involved in DNA mismatch repair. The chain is DNA mismatch repair protein MutH from Salmonella paratyphi C (strain RKS4594).